The sequence spans 254 residues: Phosphorelay intermediate protein rdeA (254 aa).

Residues 26–123 form the HPt domain; the sequence is EKEFTFELLD…KILSDFKKNW (98 aa). At His65 the chain carries Phosphohistidine. Residues 124–254 are disordered; the sequence is DKNHGEGGSD…SNSPTKIQTK (131 aa). Residues 131–143 are compositionally biased toward acidic residues; the sequence is GSDDGGDDNESEP. The span at 146–160 shows a compositional bias: low complexity; that stretch reads NNNNDGSSVNNNDSS. The segment covering 166 to 186 has biased composition (basic and acidic residues); it reads KDIENKNTDENTGKNLNERSK. Residues 220 to 238 are compositionally biased toward low complexity; it reads NNTNSSSNNNSKNENGLNS. Positions 239–254 are enriched in polar residues; that stretch reads KQPQTSSNSPTKIQTK.

Post-translationally, the phosphorelay mechanism involves the sequential transfer of a phosphate group from 'Asp-212' of pde2 to His-65 of rdeA. In vitro, dephosphorylated by dokA.

Its subcellular location is the cytoplasm. Phosphorelay protein that supplies phosphate to regA or accepts phosphate from regA; depending on the relative concentration of the phosphodonor proteins. In vitro, acts as a substrate for cheA (bacterial kinase). Plays a role in the development. ypd1 (yeast) can complement rdeA defect. The protein is Phosphorelay intermediate protein rdeA (rdeA) of Dictyostelium discoideum (Social amoeba).